The primary structure comprises 44 residues: Thymosin beta-10 (44 aa).

Belongs to the thymosin beta family.

It localises to the cytoplasm. It is found in the cytoskeleton. In terms of biological role, plays an important role in the organization of the cytoskeleton. Binds to and sequesters actin monomers (G actin) and therefore inhibits actin polymerization. The sequence is that of Thymosin beta-10 from Torpedo marmorata (Marbled electric ray).